The primary structure comprises 341 residues: MIEASELTKVYKTKKKRVIGVDNVSFKVGKGEIFGIVGYSGAGKSSLLRCINLLERPTSGTIRVDGLDLTKLGTRELRQARLKIGMIFQHFYLINQKTVFGNIAFALKAAGVRADLIPARVEELLELVGLSNKRNAYPAQLSGGQKQRVGIARALANKPSVLLCDEATSALDPTTTKSILALLKKLNEELGLTIVLITHEMAVVKEICHKMAIMQDGKMIEQGDVYDVFAAPKAPLTQEFIGDVVSFHIPEHTLSQFSGTIAKVIFKGSVAQQGIISDTLQQFSVKGNFLHGAIEYIGGRPLGIFIMELKGEPTAIQEAIAYIKQRSAEVEVIRDGLRAFS.

The ABC transporter domain occupies 2 to 241 (IEASELTKVY…PKAPLTQEFI (240 aa)). Residue 38-45 (GYSGAGKS) coordinates ATP.

The protein belongs to the ABC transporter superfamily. Methionine importer (TC 3.A.1.24) family. As to quaternary structure, the complex is composed of two ATP-binding proteins (MetN), two transmembrane proteins (MetI) and a solute-binding protein (MetQ).

Its subcellular location is the cell membrane. The catalysed reaction is L-methionine(out) + ATP + H2O = L-methionine(in) + ADP + phosphate + H(+). It carries out the reaction D-methionine(out) + ATP + H2O = D-methionine(in) + ADP + phosphate + H(+). Its function is as follows. Part of the ABC transporter complex MetNIQ involved in methionine import. Responsible for energy coupling to the transport system. This is Methionine import ATP-binding protein MetN 2 from Shouchella clausii (strain KSM-K16) (Alkalihalobacillus clausii).